The sequence spans 1182 residues: DNA-directed RNA polymerase subunit beta (1182 aa).

Residues 1150–1162 (DEEVEMKDEDDDN) show a composition bias toward acidic residues. Residues 1150 to 1182 (DEEVEMKDEDDDNIPNATSALEQVVQPTVTEEE) form a disordered region. Positions 1171 to 1182 (EQVVQPTVTEEE) are enriched in low complexity.

The protein belongs to the RNA polymerase beta chain family. In terms of assembly, the RNAP catalytic core consists of 2 alpha, 1 beta, 1 beta' and 1 omega subunit. When a sigma factor is associated with the core the holoenzyme is formed, which can initiate transcription.

The enzyme catalyses RNA(n) + a ribonucleoside 5'-triphosphate = RNA(n+1) + diphosphate. DNA-dependent RNA polymerase catalyzes the transcription of DNA into RNA using the four ribonucleoside triphosphates as substrates. This Exiguobacterium sp. (strain ATCC BAA-1283 / AT1b) protein is DNA-directed RNA polymerase subunit beta.